Consider the following 289-residue polypeptide: uncharacterized protein (289 aa).

The interval glycine 25–glutamate 66 is disordered. The segment covering alanine 33–glutamine 43 has biased composition (polar residues). Residues asparagine 44–valine 59 are compositionally biased toward low complexity.

This is an uncharacterized protein from Haemophilus influenzae (strain ATCC 51907 / DSM 11121 / KW20 / Rd).